The chain runs to 116 residues: CDKN2AIP N-terminal-like protein (116 aa).

Methionine 1 bears the N-acetylmethionine mark. Residues 24-116 (AEQFRSYSES…RSELMKKHQS (93 aa)) form the XRN2-binding (XTBD) domain.

Belongs to the CARF family. As to quaternary structure, interacts with XRN2; the interaction is direct.

The sequence is that of CDKN2AIP N-terminal-like protein (Cdkn2aipnl) from Rattus norvegicus (Rat).